The following is a 31-amino-acid chain: uncharacterized protein (31 aa).

This is an uncharacterized protein from Caenorhabditis elegans.